Consider the following 350-residue polypeptide: Isopentenyl-diphosphate delta-isomerase (350 aa).

15–16 provides a ligand contact to substrate; sequence RK. FMN contacts are provided by residues serine 73, 74-76, serine 104, and asparagine 132; that span reads SMT. 104-106 is a binding site for substrate; sequence SQR. Glutamine 167 contributes to the substrate binding site. A Mg(2+)-binding site is contributed by glutamate 168. Residues lysine 199, threonine 229, 279–281, and 300–301 each bind FMN; these read GLR and AM.

This sequence belongs to the IPP isomerase type 2 family. Homooctamer. Dimer of tetramers. It depends on FMN as a cofactor. NADPH is required as a cofactor. Requires Mg(2+) as cofactor.

The protein localises to the cytoplasm. The enzyme catalyses isopentenyl diphosphate = dimethylallyl diphosphate. Functionally, involved in the biosynthesis of isoprenoids. Catalyzes the 1,3-allylic rearrangement of the homoallylic substrate isopentenyl (IPP) to its allylic isomer, dimethylallyl diphosphate (DMAPP). The sequence is that of Isopentenyl-diphosphate delta-isomerase from Nostoc sp. (strain PCC 7120 / SAG 25.82 / UTEX 2576).